A 570-amino-acid polypeptide reads, in one-letter code: Urease subunit alpha (570 aa).

The Urease domain occupies 131–570 (GGMDSHIHFI…LPMAQRYFLF (440 aa)). Ni(2+) contacts are provided by histidine 136, histidine 138, and lysine 219. Lysine 219 carries the N6-carboxylysine modification. Residue histidine 221 coordinates substrate. Residues histidine 248 and histidine 274 each contribute to the Ni(2+) site. Histidine 322 acts as the Proton donor in catalysis. A Ni(2+)-binding site is contributed by aspartate 362.

Belongs to the metallo-dependent hydrolases superfamily. Urease alpha subunit family. Heterotrimer of UreA (gamma), UreB (beta) and UreC (alpha) subunits. Three heterotrimers associate to form the active enzyme. Ni cation is required as a cofactor. Carboxylation allows a single lysine to coordinate two nickel ions.

It localises to the cytoplasm. It catalyses the reaction urea + 2 H2O + H(+) = hydrogencarbonate + 2 NH4(+). It participates in nitrogen metabolism; urea degradation; CO(2) and NH(3) from urea (urease route): step 1/1. The protein is Urease subunit alpha of Allorhizobium ampelinum (strain ATCC BAA-846 / DSM 112012 / S4) (Agrobacterium vitis (strain S4)).